The primary structure comprises 82 residues: uncharacterized protein (82 aa).

This is an uncharacterized protein from Anabaena cylindrica.